The primary structure comprises 619 residues: CLPTM1-like membrane protein cnrB (619 aa).

The segment at M1–Q21 is disordered. A compositionally biased stretch (low complexity) spans A9–Q21. A run of 6 helical transmembrane segments spans residues I26–A46, W324–F344, L360–L380, T384–G404, Y445–H465, and V474–I496. Positions S566 to V619 are disordered. Over residues Q574–E590 the composition is skewed to basic and acidic residues. Acidic residues predominate over residues K591–S605.

The protein belongs to the CLPTM1 family.

Its subcellular location is the membrane. The chain is CLPTM1-like membrane protein cnrB (cnrB) from Dictyostelium discoideum (Social amoeba).